Reading from the N-terminus, the 233-residue chain is Putative N-acetylmannosamine-6-phosphate 2-epimerase (233 aa).

The protein belongs to the NanE family.

It carries out the reaction an N-acyl-D-glucosamine 6-phosphate = an N-acyl-D-mannosamine 6-phosphate. The protein operates within amino-sugar metabolism; N-acetylneuraminate degradation; D-fructose 6-phosphate from N-acetylneuraminate: step 3/5. Its function is as follows. Converts N-acetylmannosamine-6-phosphate (ManNAc-6-P) to N-acetylglucosamine-6-phosphate (GlcNAc-6-P). The protein is Putative N-acetylmannosamine-6-phosphate 2-epimerase of Yersinia pestis bv. Antiqua (strain Antiqua).